A 359-amino-acid chain; its full sequence is Guanine nucleotide-binding protein G(q) subunit alpha (359 aa).

S-palmitoyl cysteine attachment occurs at residues cysteine 9 and cysteine 10. One can recognise a G-alpha domain in the interval 38-359 (RELKLLLLGT…QLNLKEYNLV (322 aa)). A G1 motif region spans residues 41–54 (KLLLLGTGESGKST). Serine 50, glycine 51, lysine 52, serine 53, threonine 54, serine 156, leucine 180, arginine 181, and arginine 183 together coordinate GTP. Position 53 (serine 53) interacts with Mg(2+). Residues 178-186 (DVLRVRVPT) are G2 motif. Threonine 186 lines the Mg(2+) pocket. The tract at residues 201–210 (FRMVDVGGQR) is G3 motif. At glutamine 209 the chain carries 5-glutamyl histamine. The G4 motif stretch occupies residues 270-277 (ILFLNKKD). Positions 274, 275, 277, and 331 each coordinate GTP. The G5 motif stretch occupies residues 329–334 (TCATDT).

It belongs to the G-alpha family. G(q) subfamily. G proteins are composed of 3 units; alpha, beta and gamma. The alpha chain contains the guanine nucleotide binding site. Interacts (GDP-bound form) with RIC8A (via C-terminus); promoting GNAQ folding and association with the plasma membrane. Binds NHERF1. Forms a complex with PECAM1 and BDKRB2. Interacts with GAS2L2. Palmitoylated by ZDHHC3 and ZDHHC7. Palmitoylation occurs in the Golgi and participates in the localization of GNAQ to the plasma membrane. In terms of processing, histaminylated at Gln-209 residues by TGM2.

It localises to the cell membrane. The protein localises to the golgi apparatus. Its subcellular location is the nucleus. The protein resides in the nucleus membrane. The catalysed reaction is GTP + H2O = GDP + phosphate + H(+). Its function is as follows. Guanine nucleotide-binding proteins (G proteins) function as transducers downstream of G protein-coupled receptors (GPCRs) in numerous signaling cascades. The alpha chain contains the guanine nucleotide binding site and alternates between an active, GTP-bound state and an inactive, GDP-bound state. Signaling by an activated GPCR promotes GDP release and GTP binding. The alpha subunit has a low GTPase activity that converts bound GTP to GDP, thereby terminating the signal. Both GDP release and GTP hydrolysis are modulated by numerous regulatory proteins. Signaling is mediated via phospholipase C-beta-dependent inositol lipid hydrolysis for signal propagation: activates phospholipase C-beta: following GPCR activation, GNAQ activates PLC-beta (PLCB1, PLCB2, PLCB3 or PLCB4), leading to production of diacylglycerol (DAG) and inositol 1,4,5-trisphosphate (IP3). Required for platelet activation. Regulates B-cell selection and survival and is required to prevent B-cell-dependent autoimmunity. Regulates chemotaxis of BM-derived neutrophils and dendritic cells (in vitro). Transduces FFAR4 signaling in response to long-chain fatty acids (LCFAs). Together with GNA11, required for heart development. In Rattus norvegicus (Rat), this protein is Guanine nucleotide-binding protein G(q) subunit alpha (Gnaq).